The following is a 121-amino-acid chain: Small ribosomal subunit protein bS6 (121 aa).

Belongs to the bacterial ribosomal protein bS6 family.

Its function is as follows. Binds together with bS18 to 16S ribosomal RNA. This Rickettsia conorii (strain ATCC VR-613 / Malish 7) protein is Small ribosomal subunit protein bS6.